Here is a 200-residue protein sequence, read N- to C-terminus: NAD(P)H dehydrogenase (quinone) (200 aa).

The 188-residue stretch at 4–191 (VLVLYYSSYG…GGARYQGALV (188 aa)) folds into the Flavodoxin-like domain. FMN is bound by residues 10-15 (SSYGHI) and 79-81 (TRF). NAD(+) is bound at residue tyrosine 12. Tryptophan 99 contributes to the substrate binding site. Residues 114–120 (STASQHG) and histidine 135 contribute to the FMN site.

It belongs to the WrbA family. It depends on FMN as a cofactor.

It carries out the reaction a quinone + NADH + H(+) = a quinol + NAD(+). The catalysed reaction is a quinone + NADPH + H(+) = a quinol + NADP(+). This chain is NAD(P)H dehydrogenase (quinone), found in Rhodospirillum centenum (strain ATCC 51521 / SW).